A 312-amino-acid polypeptide reads, in one-letter code: Ribonuclease Z (312 aa).

Zn(2+) is bound by residues His62, His64, Asp66, His67, His139, Asp210, and His268. Catalysis depends on Asp66, which acts as the Proton acceptor.

Belongs to the RNase Z family. In terms of assembly, homodimer. Zn(2+) serves as cofactor.

It catalyses the reaction Endonucleolytic cleavage of RNA, removing extra 3' nucleotides from tRNA precursor, generating 3' termini of tRNAs. A 3'-hydroxy group is left at the tRNA terminus and a 5'-phosphoryl group is left at the trailer molecule.. In terms of biological role, zinc phosphodiesterase, which displays some tRNA 3'-processing endonuclease activity. Probably involved in tRNA maturation, by removing a 3'-trailer from precursor tRNA. The polypeptide is Ribonuclease Z (Crocosphaera subtropica (strain ATCC 51142 / BH68) (Cyanothece sp. (strain ATCC 51142))).